A 240-amino-acid polypeptide reads, in one-letter code: UDP-2,3-diacylglucosamine hydrolase (240 aa).

The Mn(2+) site is built by D9, H11, D43, N81, and H116. Residue N81 to R82 coordinates substrate. The substrate site is built by D124, S162, K166, K169, and H197. Residues H197 and H199 each coordinate Mn(2+).

The protein belongs to the LpxH family. The cofactor is Mn(2+).

Its subcellular location is the cell inner membrane. The enzyme catalyses UDP-2-N,3-O-bis[(3R)-3-hydroxytetradecanoyl]-alpha-D-glucosamine + H2O = 2-N,3-O-bis[(3R)-3-hydroxytetradecanoyl]-alpha-D-glucosaminyl 1-phosphate + UMP + 2 H(+). The protein operates within glycolipid biosynthesis; lipid IV(A) biosynthesis; lipid IV(A) from (3R)-3-hydroxytetradecanoyl-[acyl-carrier-protein] and UDP-N-acetyl-alpha-D-glucosamine: step 4/6. Functionally, hydrolyzes the pyrophosphate bond of UDP-2,3-diacylglucosamine to yield 2,3-diacylglucosamine 1-phosphate (lipid X) and UMP by catalyzing the attack of water at the alpha-P atom. Involved in the biosynthesis of lipid A, a phosphorylated glycolipid that anchors the lipopolysaccharide to the outer membrane of the cell. This chain is UDP-2,3-diacylglucosamine hydrolase, found in Neisseria meningitidis serogroup C / serotype 2a (strain ATCC 700532 / DSM 15464 / FAM18).